Here is a 179-residue protein sequence, read N- to C-terminus: Chymotrypsin inhibitor ECI (179 aa).

Gln-1 carries the pyrrolidone carboxylic acid modification. 2 disulfides stabilise this stretch: Cys-40/Cys-84 and Cys-134/Cys-143.

Belongs to the protease inhibitor I3 (leguminous Kunitz-type inhibitor) family.

Its function is as follows. Inhibition of chymotrypsin. The protein is Chymotrypsin inhibitor ECI of Erythrina variegata (Indian coral tree).